The chain runs to 256 residues: Nuclear shuttle protein (256 aa).

Positions Y21 to S42 match the Bipartite nuclear localization signal motif. A Nuclear localization signal motif is present at residues Q81–L96. The interval E150–D187 is interaction with Arabidopsis thaliana NSI protein.

The protein belongs to the begomovirus nuclear shuttle protein family. In terms of assembly, binds to single-stranded and double-stranded viral DNA. Interacts with the host nuclear shuttle interacting (NSI) protein. This interaction may allow NSP to recruit NSI monomers to the viral genome and thus regulate nuclear export of viral genome by NSP.

It is found in the host nucleus. The protein localises to the host cytoplasm. It localises to the host cell membrane. Binds to the genomic viral ssDNA, shuttles it into and out of the cell nucleus. Begomoviruses use 2 proteins to transport their DNA from cell to cell. The nuclear shuttle protein (NSP) shuttles it between nucleus and cytoplasm and the movement protein (MP) probably transports the DNA-NSP complex to the cell periphery and facilitates movement across the cell wall. The protein is Nuclear shuttle protein of Macroptilium lathyroides (Lima bean).